Here is a 156-residue protein sequence, read N- to C-terminus: Phosphopantetheine adenylyltransferase (156 aa).

Residue T10 coordinates substrate. Residues 10–11 and H18 contribute to the ATP site; that span reads TF. Positions 42, 74, and 88 each coordinate substrate. ATP is bound by residues 89–91, E99, and 124–130; these read GLR and NAFISSS.

It belongs to the bacterial CoaD family. Homohexamer. Requires Mg(2+) as cofactor.

It localises to the cytoplasm. The catalysed reaction is (R)-4'-phosphopantetheine + ATP + H(+) = 3'-dephospho-CoA + diphosphate. It participates in cofactor biosynthesis; coenzyme A biosynthesis; CoA from (R)-pantothenate: step 4/5. Reversibly transfers an adenylyl group from ATP to 4'-phosphopantetheine, yielding dephospho-CoA (dPCoA) and pyrophosphate. The protein is Phosphopantetheine adenylyltransferase of Campylobacter concisus (strain 13826).